The primary structure comprises 280 residues: Shikimate dehydrogenase (NADP(+)) (280 aa).

Residues 18–20 and Thr65 contribute to the shikimate site; that span reads SRS. Catalysis depends on Lys69, which acts as the Proton acceptor. Residues Asn90 and Asp105 each coordinate shikimate. NADP(+)-binding positions include 131–135, 154–159, and Ile219; these read GAGGA and NRTRAR. Residue Tyr221 coordinates shikimate. Gly242 contributes to the NADP(+) binding site.

This sequence belongs to the shikimate dehydrogenase family. As to quaternary structure, homodimer.

It carries out the reaction shikimate + NADP(+) = 3-dehydroshikimate + NADPH + H(+). Its pathway is metabolic intermediate biosynthesis; chorismate biosynthesis; chorismate from D-erythrose 4-phosphate and phosphoenolpyruvate: step 4/7. Functionally, involved in the biosynthesis of the chorismate, which leads to the biosynthesis of aromatic amino acids. Catalyzes the reversible NADPH linked reduction of 3-dehydroshikimate (DHSA) to yield shikimate (SA). This Methylocella silvestris (strain DSM 15510 / CIP 108128 / LMG 27833 / NCIMB 13906 / BL2) protein is Shikimate dehydrogenase (NADP(+)).